Consider the following 223-residue polypeptide: Small ribosomal subunit protein uS3 (223 aa).

The region spanning 39–108 (IRKFVKKKGA…VILINIVEVK (70 aa)) is the KH type-2 domain.

This sequence belongs to the universal ribosomal protein uS3 family. Part of the 30S ribosomal subunit. Forms a tight complex with proteins S10 and S14.

In terms of biological role, binds the lower part of the 30S subunit head. Binds mRNA in the 70S ribosome, positioning it for translation. The sequence is that of Small ribosomal subunit protein uS3 from Clostridium kluyveri (strain NBRC 12016).